The primary structure comprises 419 residues: Light-independent protochlorophyllide reductase subunit N (419 aa).

The [4Fe-4S] cluster site is built by Cys-20, Cys-45, and Cys-102.

Belongs to the BchN/ChlN family. Protochlorophyllide reductase is composed of three subunits; BchL, BchN and BchB. Forms a heterotetramer of two BchB and two BchN subunits. [4Fe-4S] cluster is required as a cofactor.

The catalysed reaction is chlorophyllide a + oxidized 2[4Fe-4S]-[ferredoxin] + 2 ADP + 2 phosphate = protochlorophyllide a + reduced 2[4Fe-4S]-[ferredoxin] + 2 ATP + 2 H2O. The protein operates within porphyrin-containing compound metabolism; bacteriochlorophyll biosynthesis (light-independent). Component of the dark-operative protochlorophyllide reductase (DPOR) that uses Mg-ATP and reduced ferredoxin to reduce ring D of protochlorophyllide (Pchlide) to form chlorophyllide a (Chlide). This reaction is light-independent. The NB-protein (BchN-BchB) is the catalytic component of the complex. In Chlorobaculum tepidum (strain ATCC 49652 / DSM 12025 / NBRC 103806 / TLS) (Chlorobium tepidum), this protein is Light-independent protochlorophyllide reductase subunit N.